Here is a 479-residue protein sequence, read N- to C-terminus: Ribosomal RNA small subunit methyltransferase F (479 aa).

S-adenosyl-L-methionine contacts are provided by residues 125-131, glutamate 149, aspartate 176, and aspartate 194; that span reads AAAPGSK. Cysteine 247 functions as the Nucleophile in the catalytic mechanism.

Belongs to the class I-like SAM-binding methyltransferase superfamily. RsmB/NOP family.

It is found in the cytoplasm. It catalyses the reaction cytidine(1407) in 16S rRNA + S-adenosyl-L-methionine = 5-methylcytidine(1407) in 16S rRNA + S-adenosyl-L-homocysteine + H(+). In terms of biological role, specifically methylates the cytosine at position 1407 (m5C1407) of 16S rRNA. The polypeptide is Ribosomal RNA small subunit methyltransferase F (Escherichia coli O157:H7 (strain EC4115 / EHEC)).